Here is a 199-residue protein sequence, read N- to C-terminus: Thymidylate kinase (199 aa).

Residue G7–S14 participates in ATP binding.

It belongs to the thymidylate kinase family.

The enzyme catalyses dTMP + ATP = dTDP + ADP. In terms of biological role, phosphorylation of dTMP to form dTDP in both de novo and salvage pathways of dTTP synthesis. In Neorickettsia sennetsu (strain ATCC VR-367 / Miyayama) (Ehrlichia sennetsu), this protein is Thymidylate kinase.